Reading from the N-terminus, the 449-residue chain is NADP-specific glutamate dehydrogenase (449 aa).

Lysine 125 is an active-site residue.

This sequence belongs to the Glu/Leu/Phe/Val dehydrogenases family. As to quaternary structure, homohexamer.

It carries out the reaction L-glutamate + NADP(+) + H2O = 2-oxoglutarate + NH4(+) + NADPH + H(+). The sequence is that of NADP-specific glutamate dehydrogenase from Giardia intestinalis (Giardia lamblia).